Consider the following 88-residue polypeptide: Putative septation protein SpoVG (88 aa).

This sequence belongs to the SpoVG family.

Could be involved in septation. The protein is Putative septation protein SpoVG of Caldicellulosiruptor saccharolyticus (strain ATCC 43494 / DSM 8903 / Tp8T 6331).